Reading from the N-terminus, the 243-residue chain is Triosephosphate isomerase (243 aa).

9–11 (NWK) is a binding site for substrate. The Electrophile role is filled by H96. The active-site Proton acceptor is E165. Residues G171, S204, and 225-226 (GG) contribute to the substrate site.

The protein belongs to the triosephosphate isomerase family. As to quaternary structure, homodimer.

It is found in the cytoplasm. The catalysed reaction is D-glyceraldehyde 3-phosphate = dihydroxyacetone phosphate. It functions in the pathway carbohydrate biosynthesis; gluconeogenesis. The protein operates within carbohydrate degradation; glycolysis; D-glyceraldehyde 3-phosphate from glycerone phosphate: step 1/1. Its function is as follows. Involved in the gluconeogenesis. Catalyzes stereospecifically the conversion of dihydroxyacetone phosphate (DHAP) to D-glyceraldehyde-3-phosphate (G3P). This chain is Triosephosphate isomerase, found in Prochlorococcus marinus (strain SARG / CCMP1375 / SS120).